The following is a 714-amino-acid chain: Polynucleotide 5'-hydroxyl-kinase NOL9 (714 aa).

Alanine 2 is subject to N-acetylalanine. The Nucleolar localization signal motif lies at 31-47 (RRGRRRFGVLTRVELRR). Residues 80 to 133 (ARSRPAPRSPPTPSVPPAPCTASATCSLLNPRNHSTPQSRAGRPVRKVSPNVTQ) form a disordered region. Residues 86–98 (PRSPPTPSVPPAP) are compositionally biased toward pro residues. Residues 107-118 (LLNPRNHSTPQS) are compositionally biased toward polar residues. Position 128 is a phosphoserine (serine 128). Residue 322–329 (GACDIGKS) coordinates ATP. The tract at residues 495 to 714 (FTYEEKESSP…PRHKLRQRRK (220 aa)) is interaction with LAS1L. Residue lysine 500 forms a Glycyl lysine isopeptide (Lys-Gly) (interchain with G-Cter in SUMO2) linkage. Serine 502 is modified (phosphoserine).

This sequence belongs to the Clp1 family. NOL9/GRC3 subfamily. As to quaternary structure, interacts with PELP1, WDR18 and SENP3. Interacts with LAS1L to form an ITS2 pre-rRNA endonuclease-kinase complex.

The protein localises to the nucleus. It localises to the nucleolus. It catalyses the reaction a 5'-end dephospho-2'-deoxyribonucleoside-DNA + ATP = a 5'-end 5'-phospho-2'-deoxyribonucleoside-DNA + ADP + H(+). It carries out the reaction a 5'-end dephospho-ribonucleoside-RNA + ATP = a 5'-end 5'-phospho-ribonucleoside-RNA + ADP + H(+). Its function is as follows. Polynucleotide kinase that can phosphorylate the 5'-hydroxyl groups of single-stranded and double-stranded RNA and DNA substrates. Involved in rRNA processing and its kinase activity is required for the processing of the 32S precursor into 5.8S and 28S rRNAs, more specifically for the generation of the major 5.8S(S) form. Required for the efficient pre-rRNA processing of internal transcribed spacer 2 (ITS2). Associates with LAS1L to form an ITS2 pre-rRNA endonuclease-kinase complex and is responsible for the transport of this complex into the nucleolus. The polypeptide is Polynucleotide 5'-hydroxyl-kinase NOL9 (Mus musculus (Mouse)).